Here is a 196-residue protein sequence, read N- to C-terminus: Cupin-domain-containing oxidoreductase srdD (196 aa).

The tract at residues 99-165 is cupin-like domain; that stretch reads DFGPGVESPL…GNGTLPGRVM (67 aa).

It belongs to the virC family.

Functionally, highly reducing polyketide synthase; part of the gene cluster that mediates the biosynthesis of sordarial, a salicylic aldehyde structurally related to the phytotoxin pyriculol. The most interesting aspect of this pathway is formation of an aromatic product from the highly reducing polyketide synthase srdA. SrdA synthesizes a reduced polyketide chain from one molecule of acetyl-CoA and five molecules of malonyl-CoA. The polyketide chain is then reductively released as an aldehyde. The oxidoreductases srdC, srdD and srdE then oxidize one of the hydroxy groups to facilitate the intramolecular aldol condensation, followed by dehydration to yield a salicylic aldehyde. This aldehyde can undergo facile reduction by endogenous reductases to yield the alcohol 1-hydroxy-2-hydroxymethyl-3-pent-1,3-dienylbenzene. The flavin-dependent srdI counteract against the propensity of the aldehydes to be reduced under physiological conditions and is responsible for reoxidizing 1-hydroxy-2-hydroxymethyl-3-pent-1,3-dienylbenzene back to the salicylic aldehyde. This salicylic aldehyde is then selectively epoxidized by the cupin-domain-containing oxidoreductase srdB to yield the epoxide, which can be hydrolyzed stereoselectively by the hydrolase srdG to give the final product sordarial. The chain is Cupin-domain-containing oxidoreductase srdD from Neurospora crassa (strain ATCC 24698 / 74-OR23-1A / CBS 708.71 / DSM 1257 / FGSC 987).